The sequence spans 442 residues: Tubulin beta chain (442 aa).

Positions 11, 69, 138, 142, 143, 144, 204, and 226 each coordinate GTP. A Mg(2+)-binding site is contributed by glutamate 69. A disordered region spans residues 421-442 (EYQQYQDATAEDEEEMDEEQME). Residues 429–442 (TAEDEEEMDEEQME) are compositionally biased toward acidic residues.

Belongs to the tubulin family. In terms of assembly, dimer of alpha and beta chains. A typical microtubule is a hollow water-filled tube with an outer diameter of 25 nm and an inner diameter of 15 nM. Alpha-beta heterodimers associate head-to-tail to form protofilaments running lengthwise along the microtubule wall with the beta-tubulin subunit facing the microtubule plus end conferring a structural polarity. Microtubules usually have 13 protofilaments but different protofilament numbers can be found in some organisms and specialized cells. Mg(2+) serves as cofactor.

The protein resides in the cytoplasm. Its subcellular location is the cytoskeleton. In terms of biological role, tubulin is the major constituent of microtubules, a cylinder consisting of laterally associated linear protofilaments composed of alpha- and beta-tubulin heterodimers. Microtubules grow by the addition of GTP-tubulin dimers to the microtubule end, where a stabilizing cap forms. Below the cap, tubulin dimers are in GDP-bound state, owing to GTPase activity of alpha-tubulin. The protein is Tubulin beta chain (TUBB1) of Stylonychia lemnae (Ciliate).